Consider the following 193-residue polypeptide: Mesogenin-1 (193 aa).

The segment at 34-59 (GPFELNQASPSQSLSPAPSLESYSSS) is disordered. A compositionally biased stretch (low complexity) spans 40 to 59 (QASPSQSLSPAPSLESYSSS). The bHLH domain maps to 124–178 (QRRRKASEREKLRMRTLADALHTLRNYLPPVYSQRGQPLTKIQTLKYTIKYIGEL).

The protein resides in the nucleus. Its function is as follows. Involved in specifying the paraxial, but not dorsal, mesoderm. May regulate the expression of T-box transcription factors required for mesoderm formation and differentiation. The chain is Mesogenin-1 (MSGN1) from Homo sapiens (Human).